A 131-amino-acid polypeptide reads, in one-letter code: Profilin-3 (131 aa).

A disulfide bond links Cys-13 and Cys-115. The short motif at 81–97 is the Involved in PIP2 interaction element; the sequence is AVIRGKKGAGGITIKKT. The residue at position 111 (Thr-111) is a Phosphothreonine.

The protein belongs to the profilin family. In terms of assembly, occurs in many kinds of cells as a complex with monomeric actin in a 1:1 ratio. In terms of processing, phosphorylated by MAP kinases.

The protein localises to the cytoplasm. Its subcellular location is the cytoskeleton. Functionally, binds to actin and affects the structure of the cytoskeleton. At high concentrations, profilin prevents the polymerization of actin, whereas it enhances it at low concentrations. By binding to PIP2, it inhibits the formation of IP3 and DG. In Phleum pratense (Common timothy), this protein is Profilin-3 (PRO3).